Here is a 122-residue protein sequence, read N- to C-terminus: Large ribosomal subunit protein uL14 (122 aa).

Belongs to the universal ribosomal protein uL14 family. Part of the 50S ribosomal subunit. Forms a cluster with proteins L3 and L19. In the 70S ribosome, L14 and L19 interact and together make contacts with the 16S rRNA in bridges B5 and B8.

Functionally, binds to 23S rRNA. Forms part of two intersubunit bridges in the 70S ribosome. This is Large ribosomal subunit protein uL14 from Desulfosudis oleivorans (strain DSM 6200 / JCM 39069 / Hxd3) (Desulfococcus oleovorans).